A 122-amino-acid polypeptide reads, in one-letter code: Large ribosomal subunit protein uL14 (122 aa).

It belongs to the universal ribosomal protein uL14 family. Part of the 50S ribosomal subunit. Forms a cluster with proteins L3 and L19. In the 70S ribosome, L14 and L19 interact and together make contacts with the 16S rRNA in bridges B5 and B8.

In terms of biological role, binds to 23S rRNA. Forms part of two intersubunit bridges in the 70S ribosome. This is Large ribosomal subunit protein uL14 from Chlorobium phaeovibrioides (strain DSM 265 / 1930) (Prosthecochloris vibrioformis (strain DSM 265)).